The primary structure comprises 39 residues: Cytochrome b559 subunit beta (39 aa).

A helical transmembrane segment spans residues W14–S30. H18 is a binding site for heme.

In terms of assembly, heterodimer of an alpha subunit and a beta subunit. PSII is composed of 1 copy each of membrane proteins PsbA, PsbB, PsbC, PsbD, PsbE, PsbF, PsbH, PsbI, PsbJ, PsbK, PsbL, PsbM, PsbT, PsbX, PsbY, PsbZ, Psb30/Ycf12, at least 3 peripheral proteins of the oxygen-evolving complex and a large number of cofactors. It forms dimeric complexes. Heme b serves as cofactor. The N-terminus is blocked.

It is found in the plastid. It localises to the chloroplast thylakoid membrane. In terms of biological role, this b-type cytochrome is tightly associated with the reaction center of photosystem II (PSII). PSII is a light-driven water:plastoquinone oxidoreductase that uses light energy to abstract electrons from H(2)O, generating O(2) and a proton gradient subsequently used for ATP formation. It consists of a core antenna complex that captures photons, and an electron transfer chain that converts photonic excitation into a charge separation. This Spinacia oleracea (Spinach) protein is Cytochrome b559 subunit beta.